A 187-amino-acid chain; its full sequence is T-cell receptor-associated transmembrane adapter 1 (187 aa).

Over 1–7 (MSGSSGC) the chain is Extracellular. Residues 8–28 (PFFLWGLLAFLGLALVISLIF) traverse the membrane as a helical; Signal-anchor for type III membrane protein segment. Over 29–187 (NISHYVEKQR…LIRAKREPVI (159 aa)) the chain is Cytoplasmic. The residue at position 46 (S46) is a Phosphoserine. Y80 carries the post-translational modification Phosphotyrosine. Residues 80 to 83 (YEQM) form an interaction with PIK3R1 region. Positions 117-138 (SVKGKRRRPRKQNTNVSDRGKD) are disordered.

Homodimer; disulfide-linked. Interacts with CD3Z. When phosphorylated, interacts with PIK3R1. In terms of processing, phosphorylated on tyrosines upon TCR activation. As to expression, present in T-cells (at protein level).

It is found in the cell membrane. Functionally, stabilizes the TCR (T-cell antigen receptor)/CD3 complex at the surface of T-cells. This Mus musculus (Mouse) protein is T-cell receptor-associated transmembrane adapter 1 (Trat1).